A 155-amino-acid polypeptide reads, in one-letter code: Ciliary microtubule inner protein 2C (155 aa).

Belongs to the CIMIP2 family.

The protein resides in the cytoplasm. Its subcellular location is the cytoskeleton. It is found in the cilium axoneme. Functionally, microtubule inner protein (MIP) part of the dynein-decorated doublet microtubules (DMTs) in cilia axoneme, which is required for motile cilia beating. The chain is Ciliary microtubule inner protein 2C (cimip2ca) from Xenopus laevis (African clawed frog).